Consider the following 89-residue polypeptide: Small ribosomal subunit protein uS17 (89 aa).

The protein belongs to the universal ribosomal protein uS17 family. Part of the 30S ribosomal subunit.

Its function is as follows. One of the primary rRNA binding proteins, it binds specifically to the 5'-end of 16S ribosomal RNA. The chain is Small ribosomal subunit protein uS17 from Syntrophomonas wolfei subsp. wolfei (strain DSM 2245B / Goettingen).